The sequence spans 561 residues: Arginine--tRNA ligase (561 aa).

The 'HIGH' region motif lies at 108–118 (PNVAKEMHVGH).

This sequence belongs to the class-I aminoacyl-tRNA synthetase family. In terms of assembly, monomer.

It is found in the cytoplasm. It catalyses the reaction tRNA(Arg) + L-arginine + ATP = L-arginyl-tRNA(Arg) + AMP + diphosphate. In Haemophilus ducreyi (strain 35000HP / ATCC 700724), this protein is Arginine--tRNA ligase.